The chain runs to 616 residues: Bifunctional 2-aminoethylphosphonate cytidylyltransferase/aminotransferase (616 aa).

The interval 1 to 240 (MIKQAVILAG…VKNIYPHIVE (240 aa)) is 2-aminoethylphosphonate cytidylyltransferase. The CMP-(2-aminoethyl)phosphonate site is built by Leu8, Gly10, Gly11, Lys25, Thr83, Thr88, Glu104, and Ser105. Residues Asp106 and Asp136 each contribute to the Mg(2+) site. Residues Asp136, Lys153, and Glu196 each contribute to the CMP-(2-aminoethyl)phosphonate site. The Mg(2+) site is built by Glu220 and Asp222. Residues 250 to 616 (EVLLNPGPAT…EYMNGIGVGV (367 aa)) are 2-aminoethylphosphonate aminotransferase. 6 residues coordinate pyridoxal 5'-phosphate: Ser313, Gly314, Thr315, Thr390, Lys441, and Thr490.

The protein in the N-terminal section; belongs to the LicC/PntC cytidylyltransferase family. In the C-terminal section; belongs to the class-V pyridoxal-phosphate-dependent aminotransferase family. PhnW subfamily. In terms of assembly, homodimer. It depends on Mg(2+) as a cofactor. Requires Zn(2+) as cofactor. Pyridoxal 5'-phosphate serves as cofactor.

It carries out the reaction (2-aminoethyl)phosphonate + CTP = CMP-(2-aminoethyl)phosphonate + diphosphate. The enzyme catalyses (2-aminoethyl)phosphonate + pyruvate = phosphonoacetaldehyde + L-alanine. It participates in phosphorus metabolism; phosphonate biosynthesis. With respect to regulation, cytidylyltransferase activity is inhibited in the presence of EDTA and is restored by the addition of Mg(2+) or Zn(2+). Its function is as follows. Bifunctional transferase involved in the biosynthesis of cell-surface phosphonates. The aminotransferase region catalyzes the transformation of phosphonoacetaldehyde (PnAA) to 2-aminoethylphosphonate (AEP). The cytidylyltransferase region catalyzes the activation of 2-aminoethylphosphonate (AEP) to CMP-2-aminoethylphosphonate (CMP-AEP). Cannot use phosphocholine. Exhibits strong activity towards CTP, limited activity towards ATP and no activity with GTP. This is Bifunctional 2-aminoethylphosphonate cytidylyltransferase/aminotransferase from Treponema denticola (strain ATCC 35405 / DSM 14222 / CIP 103919 / JCM 8153 / KCTC 15104).